The following is a 67-amino-acid chain: DNA-directed RNA polymerase subunit omega (67 aa).

It belongs to the RNA polymerase subunit omega family. As to quaternary structure, the RNAP catalytic core consists of 2 alpha, 1 beta, 1 beta' and 1 omega subunit. When a sigma factor is associated with the core the holoenzyme is formed, which can initiate transcription.

It carries out the reaction RNA(n) + a ribonucleoside 5'-triphosphate = RNA(n+1) + diphosphate. Promotes RNA polymerase assembly. Latches the N- and C-terminal regions of the beta' subunit thereby facilitating its interaction with the beta and alpha subunits. This is DNA-directed RNA polymerase subunit omega from Bordetella avium (strain 197N).